A 210-amino-acid chain; its full sequence is Mitochondrial cardiolipin hydrolase (210 aa).

The Mitochondrial intermembrane portion of the chain corresponds to 1–6; the sequence is MLLWGR. The helical transmembrane segment at 7–24 threads the bilayer; that stretch reads WKVVAGLAGLALSLELLL. The Cytoplasmic segment spans residues 25-210; sequence RYMRRRKPIR…YDFFPEKENK (186 aa). The PLD phosphodiesterase domain occupies 138-165; it reads SSGYMHHKFAVVDGTVVLTGSLNWTVQA. Active-site residues include His-143, Lys-145, and Asp-150.

Belongs to the phospholipase D family. MitoPLD/Zucchini subfamily. Homodimer.

The protein resides in the mitochondrion outer membrane. The enzyme catalyses a cardiolipin + H2O = a 1,2-diacyl-sn-glycero-3-phospho-(1'-sn-glycerol) + a 1,2-diacyl-sn-glycero-3-phosphate + H(+). Presents phospholipase and nuclease activities, depending on the different physiological conditions. Plays a key role in mitochondrial fusion and fission via its phospholipase activity. In its phospholipase role, it uses the mitochondrial lipid cardiolipin as substrate to generate phosphatidate (PA or 1,2-diacyl-sn-glycero-3-phosphate), a second messenger signaling lipid. Production of PA facilitates Mitofusin-mediated fusion, whereas the cleavage of PA by the Lipin family of phosphatases produces diacylgycerol (DAG) which promotes mitochondrial fission. Regulates mitochondrial shape through facilitating mitochondrial fusion. During spermatogenesis, plays a critical role in PIWI-interacting RNA (piRNA) biogenesis. piRNAs provide essential protection against the activity of mobile genetic elements. piRNA-mediated transposon silencing is thus critical for maintaining genome stability, in particular in germline cells when transposons are mobilized as a consequence of wide-spread genomic demethylation. Has been shown to be a backbone-non-specific, single strand-specific nuclease, cleaving either RNA or DNA substrates with similar affinity. Produces 5' phosphate and 3' hydroxyl termini, suggesting it could directly participate in the processing of primary piRNA transcripts. Has been proposed to act as a cardiolipin hydrolase to generate phosphatidic acid at mitochondrial surface. Although it cannot be excluded that it can act as a phospholipase in some circumstances, this activity could not be confirmed. This Xenopus tropicalis (Western clawed frog) protein is Mitochondrial cardiolipin hydrolase (pld6).